The chain runs to 322 residues: Hapalindole dimethylallyltransferase (322 aa).

Residues R46, R60, K115, N166, Y168, R221, Y225, and K275 each contribute to the dimethylallyl diphosphate site.

The protein belongs to the aromatic prenyltransferase family.

It catalyses the reaction hapalindole G + dimethylallyl diphosphate = ambiguine A + diphosphate. It carries out the reaction hapalindole U + dimethylallyl diphosphate + H(+) = ambiguine H + diphosphate. Activity is slightly increased in the presence of Mg(2+). In terms of biological role, prenyltransferase involved in the biosynthesis of ambiguines, a family of hapalindole-type alkaloids. Catalyzes the reverse prenylation of hapalindole G or U at the C2 position with dimethylallyl diphosphate (DMAPP) to generate ambiguine A or H, respectively. In addition, accepts hapalindole A, an epimer of hapalindole G, and catalyzes normal prenylation at its C2 position. This Fischerella ambigua (strain UTEX 1903) protein is Hapalindole dimethylallyltransferase.